The chain runs to 421 residues: Phosphoribosylamine--glycine ligase (421 aa).

The 207-residue stretch at 108 to 314 (KEIMVKYNVP…FAQNIDDIMM (207 aa)) folds into the ATP-grasp domain. 134–195 (IEEQGAPIVV…EEFLDGEEFS (62 aa)) is a binding site for ATP. Glu-284 and Asn-286 together coordinate Mg(2+).

It belongs to the GARS family. The cofactor is Mg(2+). Mn(2+) serves as cofactor.

The enzyme catalyses 5-phospho-beta-D-ribosylamine + glycine + ATP = N(1)-(5-phospho-beta-D-ribosyl)glycinamide + ADP + phosphate + H(+). Its pathway is purine metabolism; IMP biosynthesis via de novo pathway; N(1)-(5-phospho-D-ribosyl)glycinamide from 5-phospho-alpha-D-ribose 1-diphosphate: step 2/2. This Streptococcus pyogenes serotype M6 (strain ATCC BAA-946 / MGAS10394) protein is Phosphoribosylamine--glycine ligase.